We begin with the raw amino-acid sequence, 100 residues long: NADH-quinone oxidoreductase subunit K (100 aa).

3 helical membrane-spanning segments follow: residues 2 to 22 (IPLQHGLILAAILFVLGLTGV), 28 to 48 (LLFMLIGLEIMINAAALAFVV), and 60 to 80 (VMFILAISLAAAEASIGLALL).

It belongs to the complex I subunit 4L family. NDH-1 is composed of 13 different subunits. Subunits NuoA, H, J, K, L, M, N constitute the membrane sector of the complex.

The protein resides in the cell inner membrane. The catalysed reaction is a quinone + NADH + 5 H(+)(in) = a quinol + NAD(+) + 4 H(+)(out). In terms of biological role, NDH-1 shuttles electrons from NADH, via FMN and iron-sulfur (Fe-S) centers, to quinones in the respiratory chain. The immediate electron acceptor for the enzyme in this species is believed to be ubiquinone. Couples the redox reaction to proton translocation (for every two electrons transferred, four hydrogen ions are translocated across the cytoplasmic membrane), and thus conserves the redox energy in a proton gradient. In Erwinia tasmaniensis (strain DSM 17950 / CFBP 7177 / CIP 109463 / NCPPB 4357 / Et1/99), this protein is NADH-quinone oxidoreductase subunit K.